The chain runs to 312 residues: Pyridoxal kinase (312 aa).

Met1 is modified (N-acetylmethionine). Pyridoxal is bound by residues Ser12 and Thr47. Pyridoxal 5'-phosphate is bound at residue Thr47. A Phosphoserine modification is found at Ser59. Asp113 lines the ATP pocket. Na(+) is bound at residue Asp113. Asp118 is a binding site for Mg(2+). Thr148 is a Na(+) binding site. Residues 150–153 (NQFE) and 186–187 (TS) contribute to the ATP site. Thr186 serves as a coordination point for Na(+). At Ser213 the chain carries Phosphoserine. ATP contacts are provided by residues 226–228 (VDA) and Thr233. Position 234 to 235 (234 to 235 (GD)) interacts with pyridoxal 5'-phosphate. Asp235 acts as the Proton acceptor in catalysis. At Ser285 the chain carries Phosphoserine.

It belongs to the pyridoxine kinase family. In terms of assembly, homodimer. Zn(2+) serves as cofactor. Mg(2+) is required as a cofactor.

Its subcellular location is the cytoplasm. It localises to the cytosol. It carries out the reaction pyridoxal + ATP = pyridoxal 5'-phosphate + ADP + H(+). The catalysed reaction is pyridoxamine + ATP = pyridoxamine 5'-phosphate + ADP + H(+). The enzyme catalyses pyridoxine + ATP = pyridoxine 5'-phosphate + ADP + H(+). Its pathway is cofactor metabolism; pyridoxal 5'-phosphate salvage; pyridoxal 5'-phosphate from pyridoxal: step 1/1. It functions in the pathway cofactor metabolism; pyridoxal 5'-phosphate salvage; pyridoxine 5'-phosphate from pyridoxine: step 1/1. It participates in cofactor metabolism; pyridoxal 5'-phosphate salvage; pyridoxamine 5'-phosphate from pyridoxamine: step 1/1. With respect to regulation, activity is increased in the presence of K(+)or Na(+). Its function is as follows. Catalyzes the phosphorylation of the dietary vitamin B6 vitamers pyridoxal (PL), pyridoxine (PN) and pyridoxamine (PM) to form pyridoxal 5'-phosphate (PLP), pyridoxine 5'-phosphate (PNP) and pyridoxamine 5'-phosphate (PMP), respectively. PLP is the active form of vitamin B6, and acts as a cofactor for over 140 different enzymatic reactions. This is Pyridoxal kinase (PDXK) from Bos taurus (Bovine).